Consider the following 394-residue polypeptide: V-type proton ATPase subunit C (394 aa).

Serine 17 carries the phosphoserine modification.

The protein belongs to the V-ATPase C subunit family. V-ATPase is a heteromultimeric enzyme composed of a peripheral catalytic V1 complex (components A to H) attached to an integral membrane V0 proton pore complex (components: a, c, c', c'', d, e, f and VOA1).

The protein localises to the cytoplasm. Its subcellular location is the vacuole membrane. In terms of biological role, subunit of the V1 complex of vacuolar(H+)-ATPase (V-ATPase), a multisubunit enzyme composed of a peripheral complex (V1) that hydrolyzes ATP and a membrane integral complex (V0) that translocates protons. V-ATPase is responsible for acidifying and maintaining the pH of intracellular compartments. Subunit C is necessary for the assembly of the catalytic sector of the enzyme and is likely to have a specific function in its catalytic activity. Reversibly leaves the enzyme after glucose depletion, causing the catalytic subcomplex V1 to detach from the V0 section. The chain is V-type proton ATPase subunit C from Schizosaccharomyces pombe (strain 972 / ATCC 24843) (Fission yeast).